The primary structure comprises 478 residues: BUB3-interacting and GLEBS motif-containing protein ZNF207 (478 aa).

Positions 1–92 are microtubule-binding region; sequence MGRKKKKQLK…EGIPEKDMDE (92 aa). C2H2-type zinc fingers lie at residues 11-34 and 35-58; these read PWCWYCNRDFDDEKILIQHQKAKH and FKCHICHKKLYTGPGLAIHCMQVH. Residues 99-111 are compositionally biased toward basic and acidic residues; the sequence is QKTQESQKKKQQD. Disordered regions lie at residues 99–157, 238–276, 300–362, and 384–478; these read QKTQ…PGMP, APTATVPAPQPPVTKPLFPSAGQMGTPVTSSSTASSNSE, VGTD…ATSK, and RNLP…GGRY. Positions 112 to 121 are enriched in acidic residues; that stretch reads DSDEYDDDDS. Positions 127 to 136 are enriched in polar residues; that stretch reads FQPQPVQPQQ. Residues 142–157 show a composition bias toward pro residues; the sequence is MAQPGLPPVPGAPGMP. Composition is skewed to low complexity over residues 267–276, 310–362, and 433–446; these read SSSTASSNSE, TPAT…ATSK, and QGMPGYLPGAMPPY. Residues 359–391 are GLEBS; the sequence is ATSKLIHPDEDISLEERRAQLPKYQRNLPRPGQ. Positions 447-467 are enriched in pro residues; it reads GQGPPMVPPYQGGPPRPPMGM.

In terms of assembly, interacts (via GLEBS region) with BUB3. Ubiquitous.

Its subcellular location is the nucleus. It localises to the chromosome. It is found in the centromere. The protein localises to the kinetochore. The protein resides in the cytoplasm. Its subcellular location is the cytoskeleton. It localises to the spindle. Kinetochore- and microtubule-binding protein that plays a key role in spindle assembly. ZNF207/BuGZ is mainly composed of disordered low-complexity regions and undergoes phase transition or coacervation to form temperature-dependent liquid droplets. Coacervation promotes microtubule bundling and concentrates tubulin, promoting microtubule polymerization and assembly of spindle and spindle matrix by concentrating its building blocks. Also acts as a regulator of mitotic chromosome alignment by mediating the stability and kinetochore loading of BUB3. Mechanisms by which BUB3 is protected are unclear: according to a first report, ZNF207/BuGZ may act by blocking ubiquitination and proteasomal degradation of BUB3. According to another report, the stabilization is independent of the proteasome. This chain is BUB3-interacting and GLEBS motif-containing protein ZNF207, found in Homo sapiens (Human).